A 372-amino-acid polypeptide reads, in one-letter code: L-selectin (372 aa).

Residues 1–28 form the signal peptide; sequence MIFPWKCQSTQRDLWNIFKLWGWTMLCC. Positions 29–38 are excised as a propeptide; the sequence is DFLAHHGTDC. The Extracellular segment spans residues 39–332; sequence WTYHYSEKPM…FSMIKEGDYN (294 aa). A C-type lectin domain is found at 55–155; it reads RFCRDNYTDL…ACHKLKAALC (101 aa). Cystine bridges form between cysteine 57/cysteine 155, cysteine 128/cysteine 147, cysteine 128/cysteine 160, cysteine 160/cysteine 171, cysteine 165/cysteine 180, cysteine 182/cysteine 191, cysteine 197/cysteine 241, cysteine 227/cysteine 254, cysteine 259/cysteine 303, and cysteine 289/cysteine 316. 2 N-linked (GlcNAc...) asparagine glycosylation sites follow: asparagine 60 and asparagine 104. Glutamate 118, asparagine 120, glutamate 126, asparagine 143, and aspartate 144 together coordinate Ca(2+). The region spanning 156–192 is the EGF-like domain; sequence YTASCQPWSCSGHGECVEIINNYTCNCDVGYYGPQCQ. The N-linked (GlcNAc...) asparagine glycan is linked to asparagine 177. 2 consecutive Sushi domains span residues 195-256 and 257-318; these read IQCE…TCQV and IQCE…ICQK. N-linked (GlcNAc...) asparagine glycans are attached at residues asparagine 216, asparagine 232, asparagine 246, and asparagine 271. The helical transmembrane segment at 333 to 355 threads the bilayer; sequence PLFIPVAVMVTAFSGLAFIIWLA. At 356-372 the chain is on the cytoplasmic side; the sequence is RRLKKGKKSKRSMDDPY.

The protein belongs to the selectin/LECAM family. In terms of assembly, interaction with SELPLG/PSGL1 and PODXL2 is required for promoting recruitment and rolling of leukocytes. This interaction is dependent on the sialyl Lewis X glycan modification of SELPLG and PODXL2, and tyrosine sulfation modifications of SELPLG. Sulfation on 'Tyr-51' of SELPLG is important for L-selectin binding. N-glycosylated.

The protein localises to the cell membrane. In terms of biological role, calcium-dependent lectin that mediates cell adhesion by binding to glycoproteins on neighboring cells. Mediates the adherence of lymphocytes to endothelial cells of high endothelial venules in peripheral lymph nodes. Promotes initial tethering and rolling of leukocytes in endothelia. In Pan troglodytes (Chimpanzee), this protein is L-selectin (SELL).